The primary structure comprises 452 residues: Na(+)/H(+) antiporter NhaA (452 aa).

A run of 11 helical transmembrane segments spans residues 27–47 (FSGI…NSAL), 67–87 (FIGM…FFLM), 108–128 (AFPA…YTLF), 137–157 (GFGI…LLLG), 166–186 (VFLV…IAIF), 194–214 (LWLL…KMGV), 216–236 (SLFP…NCGI), 314–334 (PWSA…VAIS), 343–363 (GVLP…ILGL), 381–401 (WIDI…SIFI), and 414–434 (VAKI…YFFI).

The protein belongs to the NhaA Na(+)/H(+) (TC 2.A.33) antiporter family.

The protein resides in the cell inner membrane. It carries out the reaction Na(+)(in) + 2 H(+)(out) = Na(+)(out) + 2 H(+)(in). Its function is as follows. Na(+)/H(+) antiporter that extrudes sodium in exchange for external protons. This Wolinella succinogenes (strain ATCC 29543 / DSM 1740 / CCUG 13145 / JCM 31913 / LMG 7466 / NCTC 11488 / FDC 602W) (Vibrio succinogenes) protein is Na(+)/H(+) antiporter NhaA.